Reading from the N-terminus, the 159-residue chain is Phosphopantetheine adenylyltransferase (159 aa).

T9 is a binding site for substrate. ATP contacts are provided by residues 9-10 and H17; that span reads TF. Substrate contacts are provided by K41, L73, and R87. Residues 88–90, E98, and 123–129 contribute to the ATP site; these read GLR and YSFISST.

The protein belongs to the bacterial CoaD family. As to quaternary structure, homohexamer. It depends on Mg(2+) as a cofactor.

The protein localises to the cytoplasm. The enzyme catalyses (R)-4'-phosphopantetheine + ATP + H(+) = 3'-dephospho-CoA + diphosphate. Its pathway is cofactor biosynthesis; coenzyme A biosynthesis; CoA from (R)-pantothenate: step 4/5. In terms of biological role, reversibly transfers an adenylyl group from ATP to 4'-phosphopantetheine, yielding dephospho-CoA (dPCoA) and pyrophosphate. This chain is Phosphopantetheine adenylyltransferase, found in Pseudomonas syringae pv. syringae (strain B728a).